A 341-amino-acid polypeptide reads, in one-letter code: Elongation factor Ts (341 aa).

Residues 80-83 form an involved in Mg(2+) ion dislocation from EF-Tu region; that stretch reads TDFV.

The protein belongs to the EF-Ts family.

Its subcellular location is the cytoplasm. Its function is as follows. Associates with the EF-Tu.GDP complex and induces the exchange of GDP to GTP. It remains bound to the aminoacyl-tRNA.EF-Tu.GTP complex up to the GTP hydrolysis stage on the ribosome. This Lactobacillus johnsonii (strain CNCM I-12250 / La1 / NCC 533) protein is Elongation factor Ts.